The chain runs to 631 residues: Phosphomethylpyrimidine synthase (631 aa).

Substrate-binding positions include N239, M268, Y297, H333, 353 to 355, 394 to 397, and E433; these read SRG and DGLR. Residue H437 coordinates Zn(2+). Residue Y460 participates in substrate binding. H501 contacts Zn(2+). [4Fe-4S] cluster contacts are provided by C581, C584, and C589.

It belongs to the ThiC family. As to quaternary structure, homodimer. [4Fe-4S] cluster is required as a cofactor.

It carries out the reaction 5-amino-1-(5-phospho-beta-D-ribosyl)imidazole + S-adenosyl-L-methionine = 4-amino-2-methyl-5-(phosphooxymethyl)pyrimidine + CO + 5'-deoxyadenosine + formate + L-methionine + 3 H(+). The protein operates within cofactor biosynthesis; thiamine diphosphate biosynthesis. Catalyzes the synthesis of the hydroxymethylpyrimidine phosphate (HMP-P) moiety of thiamine from aminoimidazole ribotide (AIR) in a radical S-adenosyl-L-methionine (SAM)-dependent reaction. The protein is Phosphomethylpyrimidine synthase of Salmonella schwarzengrund (strain CVM19633).